Reading from the N-terminus, the 1076-residue chain is Bifunctional glutamine synthetase adenylyltransferase/adenylyl-removing enzyme (1076 aa).

An adenylyl removase region spans residues 1–521; the sequence is MESSMFKPSS…LHLDIYYRPM (521 aa). The interval 524–1076 is adenylyl transferase; that stretch reads VNAQMENDQI…LERNRRRAQR (553 aa). The segment covering 1041-1056 has biased composition (low complexity); sequence ATATASAATPQPQTAP. The segment at 1041-1076 is disordered; the sequence is ATATASAATPQPQTAPRPRMHVIAPRLERNRRRAQR.

It belongs to the GlnE family. It depends on Mg(2+) as a cofactor.

It catalyses the reaction [glutamine synthetase]-O(4)-(5'-adenylyl)-L-tyrosine + phosphate = [glutamine synthetase]-L-tyrosine + ADP. The enzyme catalyses [glutamine synthetase]-L-tyrosine + ATP = [glutamine synthetase]-O(4)-(5'-adenylyl)-L-tyrosine + diphosphate. Its function is as follows. Involved in the regulation of glutamine synthetase GlnA, a key enzyme in the process to assimilate ammonia. When cellular nitrogen levels are high, the C-terminal adenylyl transferase (AT) inactivates GlnA by covalent transfer of an adenylyl group from ATP to specific tyrosine residue of GlnA, thus reducing its activity. Conversely, when nitrogen levels are low, the N-terminal adenylyl removase (AR) activates GlnA by removing the adenylyl group by phosphorolysis, increasing its activity. The regulatory region of GlnE binds the signal transduction protein PII (GlnB) which indicates the nitrogen status of the cell. In Bifidobacterium longum subsp. infantis (strain ATCC 15697 / DSM 20088 / JCM 1222 / NCTC 11817 / S12), this protein is Bifunctional glutamine synthetase adenylyltransferase/adenylyl-removing enzyme.